Reading from the N-terminus, the 585-residue chain is Probable inactive serine/threonine-protein kinase slob1 (585 aa).

The FYVE-type zinc-finger motif lies at 21-82 (DQSSLECNDC…LCRSCNNSFE (62 aa)). The Zn(2+) site is built by Cys-27, Cys-30, Cys-43, Cys-46, Cys-51, Cys-54, Cys-74, and Cys-77. The region spanning 108–478 (SKPLQDIGHT…STSLLNNSFN (371 aa)) is the Protein kinase domain. 2 stretches are compositionally biased toward low complexity: residues 426-456 (ISKL…NISS) and 466-503 (LPSS…ISSP). Positions 426-585 (ISKLSSSSSN…SLKPSSTKKK (160 aa)) are disordered. Positions 513 to 532 (TPPPPPPPPKSAPPPPPPPS) are enriched in pro residues. The segment covering 533-542 (SSKLPPSSSS) has biased composition (low complexity). Residues 542 to 562 (SRNSLLESIRNADNAKKLKKT) form the WH2 domain.

It belongs to the protein kinase superfamily. Ser/Thr protein kinase family.

The polypeptide is Probable inactive serine/threonine-protein kinase slob1 (slob1) (Dictyostelium discoideum (Social amoeba)).